Reading from the N-terminus, the 106-residue chain is Transcription initiation factor IIA subunit 2 (106 aa).

This sequence belongs to the TFIIA subunit 2 family. TFIIA is a heterodimer of the large unprocessed subunit 1 and a small subunit gamma. It was originally believed to be a heterotrimer of an alpha, a beta and a gamma subunit.

The protein resides in the nucleus. Functionally, TFIIA is a component of the transcription machinery of RNA polymerase II and plays an important role in transcriptional activation. TFIIA in a complex with TBP mediates transcriptional activity. The polypeptide is Transcription initiation factor IIA subunit 2 (TFIIA-S) (Arabidopsis thaliana (Mouse-ear cress)).